A 215-amino-acid chain; its full sequence is Mite allergen Der p 7 (215 aa).

A signal peptide spans 1 to 17; the sequence is MMKLLLIAAAAFVAVSA. A glycan (N-linked (GlcNAc...) asparagine) is linked at asparagine 151.

It belongs to the mite group 7 allergen family.

Its subcellular location is the secreted. The polypeptide is Mite allergen Der p 7 (DERP7) (Dermatophagoides pteronyssinus (European house dust mite)).